Reading from the N-terminus, the 969-residue chain is MNHEKTNDGNNRPSYKESLNLLKTSFSMRANAIVREPELQQFWKEKGIDFELGLANKGSTFTLHDGPPYANGNLHMGHALNKILKDIINKYQILKGSKVRFVPGWDCHGLPIELQVLKTLDRKEREDLTPIKLRKKAAAYAHKQIALQKDGFRRWGIWADWDNPYLTLQKEYEAAQIKLFGEMAFKGYIYRGLKPVHWSPSSRTALAEAELEYPEGHTSPSIYVAFSVVKLPNLLQESLSKQGLALPVHEDGLSNKLKVAIWTTTPWTLPANMAVAVNENIDYIIAKDNSEKLLIIASDLREIVSEEIGSPLEKVAIVKGKMLDGVLYKHPLFDSLNPFVLGGNYITTESGTGIVHTAPGHGVDDFNTGMKYKLPIICPVDEKGFFTSEAGDFEGLNVLKDANTKIINALKESGCLLKEKPYIHKYPYDWRTKKPTIFRATEQWFASVEGFRNDALNSIEKVEWLPQSGKKRIKSMVEDRGDWCISRQRNWGVPIPVFYSKEGSKVLLNEATIKHIYNLFVKYGADAWWELPISELLPSNYSSEAHKWEKGKDTMDVWFDSGSSWTSVISKSDELNYPADLYLEGSDQHRGWFQSSLLTSVAVNSHAPYLKVLTHGFALDENGRKMSKSLGNIIDPWKIINGGNNKKLEPAYGADVLRLWVSSVDYSVDVPIGNNILSQLSDVYRKVRNTARYLLGNLHDFDPAKDGLDIGDLPILDRWMLNRTADVVDEISIAFERYEFSKFFQLLQSFCVVDLSNFYLDIAKDRLYVSAPNDFRRRSCQYVLSLIVERLAGVISPVLSHTAEDIWQNIPYKLNEESVFQRYWPKVPDSWRDSSFNKPINQIRELRTSVNRALEDCRTRQELGSSLEASVRISPINESLQNSLTFLQENGHNSVDNLFDWLIVSKVQIGGEPWAEVLFTKEDDIGVIEIAKSRGAKCERCWHYELDIGQYERHPLLCGRCVDIIERID.

Positions 68–78 match the 'HIGH' region motif; sequence PYANGNLHMGH. An L-isoleucyl-5'-AMP-binding site is contributed by Glu584. Positions 625–629 match the 'KMSKS' region motif; the sequence is KMSKS. An ATP-binding site is contributed by Lys628. Cys938, Cys941, Cys958, and Cys961 together coordinate Zn(2+).

The protein belongs to the class-I aminoacyl-tRNA synthetase family. IleS type 1 subfamily. Monomer. It depends on Zn(2+) as a cofactor.

It localises to the cytoplasm. The catalysed reaction is tRNA(Ile) + L-isoleucine + ATP = L-isoleucyl-tRNA(Ile) + AMP + diphosphate. Catalyzes the attachment of isoleucine to tRNA(Ile). As IleRS can inadvertently accommodate and process structurally similar amino acids such as valine, to avoid such errors it has two additional distinct tRNA(Ile)-dependent editing activities. One activity is designated as 'pretransfer' editing and involves the hydrolysis of activated Val-AMP. The other activity is designated 'posttransfer' editing and involves deacylation of mischarged Val-tRNA(Ile). The protein is Isoleucine--tRNA ligase of Prochlorococcus marinus (strain SARG / CCMP1375 / SS120).